The sequence spans 314 residues: D-alanine--D-alanine ligase (314 aa).

The 196-residue stretch at 114–309 (KQLWRAHGLP…FDALVLRILD (196 aa)) folds into the ATP-grasp domain. Residue 140–195 (IEALGLPLIVKPVHEGSTIGISIVETRDALIAAHAEASRFDSAIMAERFVQGEEYT) coordinates ATP. Positions 263, 276, and 278 each coordinate Mg(2+).

Belongs to the D-alanine--D-alanine ligase family. The cofactor is Mg(2+). It depends on Mn(2+) as a cofactor.

The protein resides in the cytoplasm. The catalysed reaction is 2 D-alanine + ATP = D-alanyl-D-alanine + ADP + phosphate + H(+). Its pathway is cell wall biogenesis; peptidoglycan biosynthesis. In terms of biological role, cell wall formation. This is D-alanine--D-alanine ligase from Chromohalobacter salexigens (strain ATCC BAA-138 / DSM 3043 / CIP 106854 / NCIMB 13768 / 1H11).